A 737-amino-acid chain; its full sequence is Palmitoyltransferase akr1 (737 aa).

A compositionally biased stretch (low complexity) spans 1-15; that stretch reads MSSGNSSTGTHTNGN. The tract at residues 1–39 is disordered; sequence MSSGNSSTGTHTNGNFATLGSSPPSAVGGKGRAIPPKVT. Residues 1 to 313 are Cytoplasmic-facing; that stretch reads MSSGNSSTGT…WVRNKSLMSK (313 aa). ANK repeat units lie at residues 96 to 125, 130 to 159, 163 to 192, 196 to 225, and 228 to 258; these read EGIT…DVNA, SVAT…DPLL, QGYN…PVDV, QGHT…HANA, and EGGL…DKFA. 2 helical membrane passes run 314-334 and 335-355; these read FFFL…SNMV and VYAA…VAQK. Residues 356–374 are Cytoplasmic-facing; the sequence is AASQGPSEYRILQKTPYLS. A helical membrane pass occupies residues 375–395; the sequence is GVFAGSLFWVGFRYVFYVLPV. The Lumenal segment spans residues 396–401; that stretch reads TYSTSP. The helical transmembrane segment at 402 to 422 threads the bilayer; it reads ILNGLFAIFFSLTTYFYIYSM. Topologically, residues 423 to 498 are cytoplasmic; that stretch reads VEDPGFVPKL…DNCVGANNLR (76 aa). The 51-residue stretch at 455 to 505 folds into the DHHC domain; the sequence is NFCVSCMVRRPLRSKHCKRCARCVAKHDHHCPWIDNCVGANNLRHFVLYIT. The active-site S-palmitoyl cysteine intermediate is the C485. The chain crosses the membrane as a helical span at residues 499–519; that stretch reads HFVLYITCLEVGIVLFVQLTF. The Lumenal portion of the chain corresponds to 520–548; the sequence is NYINSLPAPAQPQCNIINETLCDFVLRDT. A helical transmembrane segment spans residues 549–569; the sequence is FTLVLDLWVCIQLVWITMLVA. Residues 570–737 are Cytoplasmic-facing; sequence VQMIQISRNQ…LSVEDPEQGV (168 aa).

It belongs to the DHHC palmitoyltransferase family. AKR/ZDHHC17 subfamily.

The protein resides in the early endosome membrane. It localises to the golgi apparatus membrane. It catalyses the reaction L-cysteinyl-[protein] + hexadecanoyl-CoA = S-hexadecanoyl-L-cysteinyl-[protein] + CoA. Its function is as follows. Palmitoyltransferase specific for casein kinase 1. In Aspergillus oryzae (strain ATCC 42149 / RIB 40) (Yellow koji mold), this protein is Palmitoyltransferase akr1 (akr1).